The following is a 229-amino-acid chain: Uracil-DNA glycosylase (229 aa).

Catalysis depends on D65, which acts as the Proton acceptor.

Belongs to the uracil-DNA glycosylase (UDG) superfamily. UNG family.

It is found in the cytoplasm. The enzyme catalyses Hydrolyzes single-stranded DNA or mismatched double-stranded DNA and polynucleotides, releasing free uracil.. In terms of biological role, excises uracil residues from the DNA which can arise as a result of misincorporation of dUMP residues by DNA polymerase or due to deamination of cytosine. This is Uracil-DNA glycosylase from Oceanobacillus iheyensis (strain DSM 14371 / CIP 107618 / JCM 11309 / KCTC 3954 / HTE831).